Reading from the N-terminus, the 143-residue chain is Oxoglutarate dehydrogenase inhibitor (143 aa).

Position 14 is a phosphothreonine (T14). Residues 68–117 form the FHA domain; sequence TTAGRHPESDIFLDDVTVSRRHAEFRINEGEFEVVDVGSLNGTYVNREPR.

Its subcellular location is the cytoplasm. An essential component of the PknG signaling pathway. When unphosphorylated, it inhibits the activity of 2-oxoglutarate dehydrogenase. When phosphorylated it does not inhibit 2-oxoglutarate dehydrogenase. The polypeptide is Oxoglutarate dehydrogenase inhibitor (odhI) (Corynebacterium glutamicum (strain ATCC 13032 / DSM 20300 / JCM 1318 / BCRC 11384 / CCUG 27702 / LMG 3730 / NBRC 12168 / NCIMB 10025 / NRRL B-2784 / 534)).